We begin with the raw amino-acid sequence, 719 residues long: Polyribonucleotide nucleotidyltransferase (719 aa).

Residues aspartate 490 and aspartate 496 each coordinate Mg(2+). One can recognise a KH domain in the interval 557–619; sequence PKIEIIIIPK…KSIDAALTRI (63 aa). The 71-residue stretch at 629-699 folds into the S1 motif domain; sequence GEIYEGKIRS…KTGKFKLSHK (71 aa).

This sequence belongs to the polyribonucleotide nucleotidyltransferase family. Mg(2+) serves as cofactor.

It is found in the cytoplasm. It catalyses the reaction RNA(n+1) + phosphate = RNA(n) + a ribonucleoside 5'-diphosphate. Its function is as follows. Involved in mRNA degradation. Catalyzes the phosphorolysis of single-stranded polyribonucleotides processively in the 3'- to 5'-direction. The polypeptide is Polyribonucleotide nucleotidyltransferase (Azobacteroides pseudotrichonymphae genomovar. CFP2).